The following is a 236-amino-acid chain: Urease accessory protein UreG (236 aa).

Positions 1–26 (MHDHSLHSGHDHGLGPGSFHDRGAPH) are disordered. Residue 42–49 (GPVGSGKT) participates in GTP binding.

This sequence belongs to the SIMIBI class G3E GTPase family. UreG subfamily. In terms of assembly, homodimer. UreD, UreF and UreG form a complex that acts as a GTP-hydrolysis-dependent molecular chaperone, activating the urease apoprotein by helping to assemble the nickel containing metallocenter of UreC. The UreE protein probably delivers the nickel.

It localises to the cytoplasm. Facilitates the functional incorporation of the urease nickel metallocenter. This process requires GTP hydrolysis, probably effectuated by UreG. The chain is Urease accessory protein UreG from Anaeromyxobacter sp. (strain Fw109-5).